A 239-amino-acid chain; its full sequence is UPF0173 metal-dependent hydrolase DVU_3308 (239 aa).

This sequence belongs to the UPF0173 family.

This is UPF0173 metal-dependent hydrolase DVU_3308 from Nitratidesulfovibrio vulgaris (strain ATCC 29579 / DSM 644 / CCUG 34227 / NCIMB 8303 / VKM B-1760 / Hildenborough) (Desulfovibrio vulgaris).